A 136-amino-acid chain; its full sequence is ATP synthase F(0) complex subunit C1, mitochondrial (136 aa).

The transit peptide at 1–61 (MQTTGALLIS…REFQTSVVSR (61 aa)) directs the protein to the mitochondrion. A helical transmembrane segment spans residues 77-97 (VGVAGSGAGIGTVFGSLIIGY). K104 carries the post-translational modification N6,N6,N6-trimethyllysine. A helical transmembrane segment spans residues 112–132 (ILGFALSEAMGLFCLMVAFLI).

Belongs to the ATPase C chain family. Homooctamer; the c-ring consists of eight c subunits forming a circle, and each subunit adopts a hairpin shape. Component of the ATP synthase complex composed at least of ATP5F1A/subunit alpha, ATP5F1B/subunit beta, ATP5MC1/subunit c (homooctomer), MT-ATP6/subunit a, MT-ATP8/subunit 8, ATP5ME/subunit e, ATP5MF/subunit f, ATP5MG/subunit g, ATP5MK/subunit k, ATP5MJ/subunit j, ATP5F1C/subunit gamma, ATP5F1D/subunit delta, ATP5F1E/subunit epsilon, ATP5PF/subunit F6, ATP5PB/subunit b, ATP5PD/subunit d, ATP5PO/subunit OSCP. ATP synthase complex consists of a soluble F(1) head domain (subunits alpha(3) and beta(3)) - the catalytic core - and a membrane F(0) domain - the membrane proton channel (subunits c, a, 8, e, f, g, k and j). These two domains are linked by a central stalk (subunits gamma, delta, and epsilon) rotating inside the F1 region and a stationary peripheral stalk (subunits F6, b, d, and OSCP). Interacts with TMEM70 (homooligomer form); this interaction facilitates the oligomer formation of subunit c/ATP5MC1 (c-ring) and the c-ring membrane insertion and also protects ATP5MC1 against intramitochondrial proteolysis. Trimethylated by ATPSCKMT at Lys-104. Methylation is required for proper incorporation of the C subunit into the ATP synthase complex and mitochondrial respiration.

It localises to the mitochondrion membrane. It catalyses the reaction H(+)(in) = H(+)(out). Subunit c, of the mitochondrial membrane ATP synthase complex (F(1)F(0) ATP synthase or Complex V) that produces ATP from ADP in the presence of a proton gradient across the membrane which is generated by electron transport complexes of the respiratory chain. ATP synthase complex consist of a soluble F(1) head domain - the catalytic core - and a membrane F(1) domain - the membrane proton channel. These two domains are linked by a central stalk rotating inside the F(1) region and a stationary peripheral stalk. During catalysis, ATP synthesis in the catalytic domain of F(1) is coupled via a rotary mechanism of the central stalk subunits to proton translocation. With the subunit a (MT-ATP6), forms the proton-conducting channel in the F(0) domain, that contains two crucial half-channels (inlet and outlet) that facilitate proton movement from the mitochondrial intermembrane space (IMS) into the matrix. Protons are taken up via the inlet half-channel and released through the outlet half-channel, following a Grotthuss mechanism. This Bos taurus (Bovine) protein is ATP synthase F(0) complex subunit C1, mitochondrial.